Reading from the N-terminus, the 116-residue chain is NADH-ubiquinone oxidoreductase chain 3 (116 aa).

The next 3 helical transmembrane spans lie at 3 to 23, 56 to 76, and 87 to 107; these read LIMTILTITAALSLILATVSF, FFLVAILFLLFDLEIALLLPL, and GTFFWATTVLILLTLGLIYEW.

Belongs to the complex I subunit 3 family.

The protein resides in the mitochondrion membrane. The enzyme catalyses a ubiquinone + NADH + 5 H(+)(in) = a ubiquinol + NAD(+) + 4 H(+)(out). Functionally, core subunit of the mitochondrial membrane respiratory chain NADH dehydrogenase (Complex I) that is believed to belong to the minimal assembly required for catalysis. Complex I functions in the transfer of electrons from NADH to the respiratory chain. The immediate electron acceptor for the enzyme is believed to be ubiquinone. The protein is NADH-ubiquinone oxidoreductase chain 3 (MT-ND3) of Carassius auratus (Goldfish).